Here is a 205-residue protein sequence, read N- to C-terminus: SCO2-like protein RP587 (205 aa).

Residues Cys82, Cys86, and His172 each coordinate Cu cation.

The protein belongs to the SCO1/2 family.

This chain is SCO2-like protein RP587, found in Rickettsia prowazekii (strain Madrid E).